A 462-amino-acid polypeptide reads, in one-letter code: Metacaspase-1 (462 aa).

Over residues 1–21 (MSYYPPPSGYPGGPPAYPPPQ) the composition is skewed to pro residues. The tract at residues 1-150 (MSYYPPPSGY…PPPPSGSVAF (150 aa)) is disordered. The segment covering 22–33 (QQQQQQQQYPSY) has biased composition (low complexity). 2 stretches are compositionally biased toward pro residues: residues 49 to 69 (PSYP…PPHS) and 77 to 102 (SPQP…PPSP). Residues His-253 and Cys-309 contribute to the active site.

Belongs to the peptidase C14B family.

Functionally, involved in cell death (apoptosis). In Coccidioides immitis (strain RS) (Valley fever fungus), this protein is Metacaspase-1 (MCA1).